The following is a 159-amino-acid chain: Growth arrest and DNA damage-inducible protein GADD45 gamma (159 aa).

The tract at residues 43–86 is homodimerization; it reads VYESAKVLNVDPDNVTFCVLAADEEDEGDIALQIHFTLIQAFCC.

Belongs to the GADD45 family. Undergoes concentration-dependent homodimerization, which is required for growth inhibititory activity and enhances interaction with PCNA. Interacts with GADD45GIP1. Interacts with PCNA.

Its function is as follows. Involved in the regulation of growth and apoptosis. Mediates activation of stress-responsive MTK1/MEKK4 MAPKKK. This Mus musculus (Mouse) protein is Growth arrest and DNA damage-inducible protein GADD45 gamma (Gadd45g).